We begin with the raw amino-acid sequence, 112 residues long: MYLSAQLMRTVTASHLTLRALSTPPLFQHRQIAAVEWCGTTRPGLARQKRTQHASSVISKSGVLSAKPSSVFLALLAGKLAEKYIYARMLLFHVSVVNECPVVFHSGPVVWK.

The N-terminal 21 residues, 1–21 (MYLSAQLMRTVTASHLTLRAL), are a transit peptide targeting the mitochondrion.

Its subcellular location is the mitochondrion. This is an uncharacterized protein from Saccharomyces cerevisiae (strain ATCC 204508 / S288c) (Baker's yeast).